We begin with the raw amino-acid sequence, 322 residues long: Acetyl-coenzyme A carboxylase carboxyl transferase subunit beta (322 aa).

The region spanning 24-293 is the CoA carboxyltransferase N-terminal domain; it reads LWIKCPDTGQ…PAVEEPAVVD (270 aa).

Belongs to the AccD/PCCB family. Acetyl-CoA carboxylase is a heterohexamer composed of biotin carboxyl carrier protein (AccB), biotin carboxylase (AccC) and two subunits each of ACCase subunit alpha (AccA) and ACCase subunit beta (AccD).

The protein localises to the cytoplasm. It carries out the reaction N(6)-carboxybiotinyl-L-lysyl-[protein] + acetyl-CoA = N(6)-biotinyl-L-lysyl-[protein] + malonyl-CoA. Its pathway is lipid metabolism; malonyl-CoA biosynthesis; malonyl-CoA from acetyl-CoA: step 1/1. Functionally, component of the acetyl coenzyme A carboxylase (ACC) complex. Biotin carboxylase (BC) catalyzes the carboxylation of biotin on its carrier protein (BCCP) and then the CO(2) group is transferred by the transcarboxylase to acetyl-CoA to form malonyl-CoA. This Rhodopseudomonas palustris (strain HaA2) protein is Acetyl-coenzyme A carboxylase carboxyl transferase subunit beta.